Reading from the N-terminus, the 280-residue chain is Dual adapter for phosphotyrosine and 3-phosphotyrosine and 3-phosphoinositide (280 aa).

Residues 35–129 (WYHGNLTRHA…GTLMVLKHPY (95 aa)) form the SH2 domain. Tyr139 carries the phosphotyrosine modification. The residue at position 141 (Ser141) is a Phosphoserine. One can recognise a PH domain in the interval 164–259 (LGTKEGYLTK…WIKILRWKLS (96 aa)).

Interacts with PtdIns(3,4,5)P3 and PLCG2. Phosphorylated on tyrosine residues.

It localises to the cytoplasm. The protein localises to the membrane. Functionally, may act as a B-cell-associated adapter that regulates B-cell antigen receptor (BCR)-signaling downstream of PI3K. In Mus musculus (Mouse), this protein is Dual adapter for phosphotyrosine and 3-phosphotyrosine and 3-phosphoinositide (Dapp1).